A 454-amino-acid chain; its full sequence is Glycosyl hydrolase family 109 protein (454 aa).

The segment at residues 1–29 is a signal peptide (tat-type signal); that stretch reads MFAMKRREFIAASAAVAASSLLPQTPAWA. Residues 43–44, Asp65, 116–119, 136–137, and Asn165 each bind NAD(+); these read MR, WEYH, and EV. Tyr194 provides a ligand contact to substrate. Position 224 to 228 (224 to 228) interacts with NAD(+); sequence SEARW. Substrate contacts are provided by residues Arg229, 241-244, and Tyr324; that span reads YPSH. Tyr241 is a binding site for NAD(+).

The protein belongs to the Gfo/Idh/MocA family. Glycosyl hydrolase 109 subfamily. Requires NAD(+) as cofactor. Post-translationally, predicted to be exported by the Tat system. The position of the signal peptide cleavage has not been experimentally proven.

Glycosidase. The protein is Glycosyl hydrolase family 109 protein of Stenotrophomonas maltophilia (strain K279a).